Reading from the N-terminus, the 69-residue chain is Amphipathic peptide OcyC2 (69 aa).

An N-terminal signal peptide occupies residues 1–23 (MKTQFAILMIAVVLMQMLVQTEG). At Ile-37 the chain carries Isoleucine amide. Residues 41–69 (GLKKLDQLDDTFDSDLSDADVKLLREMFK) constitute a propeptide that is removed on maturation.

The protein belongs to the non-disulfide-bridged peptide (NDBP) superfamily. Short antimicrobial peptide (group 4) family. Expressed by the venom gland.

It is found in the secreted. Its subcellular location is the target cell membrane. In terms of biological role, amphipathic peptide with antimicrobial activity. Shows antifungal activity with MIC values ranging from 25 to 200 uM. Does not show antifungal activity against Candida glabrata (ATCC90030) and Candida parapsilosis (ATCC22019) (MIC&gt;400 uM). The chain is Amphipathic peptide OcyC2 from Opisthacanthus cayaporum (South American scorpion).